The primary structure comprises 232 residues: Uracil-DNA glycosylase (232 aa).

The Proton acceptor role is filled by Asp-66.

Belongs to the uracil-DNA glycosylase (UDG) superfamily. UNG family.

Its subcellular location is the cytoplasm. The enzyme catalyses Hydrolyzes single-stranded DNA or mismatched double-stranded DNA and polynucleotides, releasing free uracil.. Its function is as follows. Excises uracil residues from the DNA which can arise as a result of misincorporation of dUMP residues by DNA polymerase or due to deamination of cytosine. This is Uracil-DNA glycosylase from Lactobacillus helveticus (strain DPC 4571).